An 83-amino-acid polypeptide reads, in one-letter code: Small ribosomal subunit protein bS20 (83 aa).

It belongs to the bacterial ribosomal protein bS20 family.

Functionally, binds directly to 16S ribosomal RNA. In Flavobacterium johnsoniae (strain ATCC 17061 / DSM 2064 / JCM 8514 / BCRC 14874 / CCUG 350202 / NBRC 14942 / NCIMB 11054 / UW101) (Cytophaga johnsonae), this protein is Small ribosomal subunit protein bS20.